Here is a 393-residue protein sequence, read N- to C-terminus: MAAVRRVVLIVIDSVGIGAMPDAADWGDAGANTLGNMARQRGGLPLPNLGRLGLGNLCAIEGTPPVDAPAGAYGRMAIFSHGKDTMTGHWEMVGIRPEAPFRTYPDGFPEDLIAEFCRRAGLEGVLGNKVASGTEIIKELGEEHLRTGWPIVYTSADSVFQVAAHEERFGLERLYEVCRIARDLLRPPHRVGRVIARPFVGTDRTNFTRTANRHDYALEPPRMLLDEVKDAGLSVLAVGKISDIFSGHGITYSVHTKSNADGIEKIHECLDRQEPGLIFANLVDFDMLYGHRRDVEGYARAMLEFDAALPAIMAKLGPEDVLVVTADHGNDPTYIGTDHTREYVPVLLYGEPIKPGVDVGTRASLADLGATVADLLGVPQTGFGESFADQIRK.

Mn(2+) contacts are provided by D13, D286, H291, D327, H328, and H339.

It belongs to the phosphopentomutase family. The cofactor is Mn(2+).

The protein localises to the cytoplasm. The catalysed reaction is 2-deoxy-alpha-D-ribose 1-phosphate = 2-deoxy-D-ribose 5-phosphate. It catalyses the reaction alpha-D-ribose 1-phosphate = D-ribose 5-phosphate. It participates in carbohydrate degradation; 2-deoxy-D-ribose 1-phosphate degradation; D-glyceraldehyde 3-phosphate and acetaldehyde from 2-deoxy-alpha-D-ribose 1-phosphate: step 1/2. Its function is as follows. Isomerase that catalyzes the conversion of deoxy-ribose 1-phosphate (dRib-1-P) and ribose 1-phosphate (Rib-1-P) to deoxy-ribose 5-phosphate (dRib-5-P) and ribose 5-phosphate (Rib-5-P), respectively. The sequence is that of Phosphopentomutase from Symbiobacterium thermophilum (strain DSM 24528 / JCM 14929 / IAM 14863 / T).